A 147-amino-acid polypeptide reads, in one-letter code: Acireductone dioxygenase (147 aa).

Fe(2+)-binding residues include His74, His76, Glu80, and His119. Residues His74, His76, Glu80, and His119 each coordinate Ni(2+).

Belongs to the acireductone dioxygenase (ARD) family. It depends on Fe(2+) as a cofactor. Ni(2+) serves as cofactor.

It localises to the cytoplasm. The protein resides in the nucleus. The enzyme catalyses 1,2-dihydroxy-5-(methylsulfanyl)pent-1-en-3-one + O2 = 4-methylsulfanyl-2-oxobutanoate + formate + 2 H(+). It catalyses the reaction 1,2-dihydroxy-5-(methylsulfanyl)pent-1-en-3-one + O2 = 3-(methylsulfanyl)propanoate + CO + formate + 2 H(+). It functions in the pathway amino-acid biosynthesis; L-methionine biosynthesis via salvage pathway; L-methionine from S-methyl-5-thio-alpha-D-ribose 1-phosphate: step 5/6. Its function is as follows. Catalyzes 2 different reactions between oxygen and the acireductone 1,2-dihydroxy-3-keto-5-methylthiopentene (DHK-MTPene) depending upon the metal bound in the active site. Fe-containing acireductone dioxygenase (Fe-ARD) produces formate and 2-keto-4-methylthiobutyrate (KMTB), the alpha-ketoacid precursor of methionine in the methionine recycle pathway. Ni-containing acireductone dioxygenase (Ni-ARD) produces methylthiopropionate, carbon monoxide and formate, and does not lie on the methionine recycle pathway. In Dictyostelium discoideum (Social amoeba), this protein is Acireductone dioxygenase (adi1).